Reading from the N-terminus, the 289-residue chain is Probable aquaporin PIP-type 7a (289 aa).

A disordered region spans residues methionine 1–proline 39. Residues methionine 1–glycine 57 are Cytoplasmic-facing. A helical transmembrane segment spans residues isoleucine 58–valine 78. The Extracellular portion of the chain corresponds to valine 79 to glutamine 91. A helical transmembrane segment spans residues glycine 92–serine 112. Residues glycine 113–alanine 135 are Cytoplasmic-facing. Residues asparagine 117 to alanine 119 carry the NPA 1 motif. A helical membrane pass occupies residues isoleucine 136–phenylalanine 156. Over glutamate 157–lysine 178 the chain is Extracellular. Residues glycine 179–alanine 199 form a helical membrane-spanning segment. Topologically, residues threonine 200–proline 212 are cytoplasmic. A helical transmembrane segment spans residues isoleucine 213–isoleucine 233. Over threonine 234–tryptophan 260 the chain is Extracellular. The NPA 2 signature appears at asparagine 239–alanine 241. Residues isoleucine 261–isoleucine 281 traverse the membrane as a helical segment. Residues arginine 282–lysine 289 are Cytoplasmic-facing.

This sequence belongs to the MIP/aquaporin (TC 1.A.8) family. PIP (TC 1.A.8.11) subfamily.

The protein resides in the cell membrane. Its function is as follows. Aquaporins facilitate the transport of water and small neutral solutes across cell membranes. The protein is Probable aquaporin PIP-type 7a (TRG-31) of Pisum sativum (Garden pea).